The primary structure comprises 475 residues: Methionine aminopeptidase 2-1 (475 aa).

The segment covering 1–12 (MGSKSPEGHRQT) has biased composition (basic and acidic residues). The disordered stretch occupies residues 1 to 97 (MGSKSPEGHR…LKQSSPPRVL (97 aa)). Acidic residues predominate over residues 44-57 (NLDDDNDDDGEANE). Positions 70–83 (KKKKRKRSKKKTKK) are enriched in basic residues. His-211 contributes to the substrate binding site. Positions 232, 243, and 312 each coordinate a divalent metal cation. His-320 contributes to the substrate binding site. Glu-345 and Glu-456 together coordinate a divalent metal cation.

The protein belongs to the peptidase M24A family. Methionine aminopeptidase eukaryotic type 2 subfamily. It depends on Co(2+) as a cofactor. Zn(2+) serves as cofactor. Requires Mn(2+) as cofactor. Fe(2+) is required as a cofactor.

Its subcellular location is the cytoplasm. The catalysed reaction is Release of N-terminal amino acids, preferentially methionine, from peptides and arylamides.. Functionally, cotranslationally removes the N-terminal methionine from nascent proteins. The N-terminal methionine is often cleaved when the second residue in the primary sequence is small and uncharged (Met-Ala-, Cys, Gly, Pro, Ser, Thr, or Val). The sequence is that of Methionine aminopeptidase 2-1 from Aspergillus niger (strain ATCC MYA-4892 / CBS 513.88 / FGSC A1513).